Here is a 580-residue protein sequence, read N- to C-terminus: Proline--tRNA ligase (580 aa).

Belongs to the class-II aminoacyl-tRNA synthetase family. ProS type 1 subfamily. Homodimer.

The protein localises to the cytoplasm. The enzyme catalyses tRNA(Pro) + L-proline + ATP = L-prolyl-tRNA(Pro) + AMP + diphosphate. In terms of biological role, catalyzes the attachment of proline to tRNA(Pro) in a two-step reaction: proline is first activated by ATP to form Pro-AMP and then transferred to the acceptor end of tRNA(Pro). As ProRS can inadvertently accommodate and process non-cognate amino acids such as alanine and cysteine, to avoid such errors it has two additional distinct editing activities against alanine. One activity is designated as 'pretransfer' editing and involves the tRNA(Pro)-independent hydrolysis of activated Ala-AMP. The other activity is designated 'posttransfer' editing and involves deacylation of mischarged Ala-tRNA(Pro). The misacylated Cys-tRNA(Pro) is not edited by ProRS. This Albidiferax ferrireducens (strain ATCC BAA-621 / DSM 15236 / T118) (Rhodoferax ferrireducens) protein is Proline--tRNA ligase.